A 287-amino-acid polypeptide reads, in one-letter code: 4-hydroxybenzoate octaprenyltransferase (287 aa).

7 consecutive transmembrane segments (helical) span residues 30-50 (ALWI…FALG), 92-112 (IAIA…LNGL), 133-153 (FFAI…PMAF), 158-178 (DTVP…SVAY), 207-227 (VLAI…LGAA), 232-252 (WPYW…YTLI), and 266-286 (HNNW…ALAV).

This sequence belongs to the UbiA prenyltransferase family. Requires Mg(2+) as cofactor.

Its subcellular location is the cell inner membrane. It catalyses the reaction all-trans-octaprenyl diphosphate + 4-hydroxybenzoate = 4-hydroxy-3-(all-trans-octaprenyl)benzoate + diphosphate. It participates in cofactor biosynthesis; ubiquinone biosynthesis. Its function is as follows. Catalyzes the prenylation of para-hydroxybenzoate (PHB) with an all-trans polyprenyl group. Mediates the second step in the final reaction sequence of ubiquinone-8 (UQ-8) biosynthesis, which is the condensation of the polyisoprenoid side chain with PHB, generating the first membrane-bound Q intermediate 3-octaprenyl-4-hydroxybenzoate. This Burkholderia mallei (strain NCTC 10247) protein is 4-hydroxybenzoate octaprenyltransferase.